A 155-amino-acid polypeptide reads, in one-letter code: MSRRGTAEKKTAKSDPIYRNRLVNMLVNRILKHGKKSLAYQIIYRAVKKIQQKTETNPLSVLRQAIRGVTPDITVKARRVGGSTHQVPIEIGSTQGKALAIRWLLAASRKRPGRNMAFKLSSELVDAAKGSGDAIRKKEETHRMAEANRAFAHFR.

This sequence belongs to the universal ribosomal protein uS7 family. Part of the 30S ribosomal subunit.

It is found in the plastid. The protein localises to the chloroplast. In terms of biological role, one of the primary rRNA binding proteins, it binds directly to 16S rRNA where it nucleates assembly of the head domain of the 30S subunit. The chain is Small ribosomal subunit protein uS7cz/uS7cy (rps7-A) from Atropa belladonna (Belladonna).